The following is a 365-amino-acid chain: Peptide chain release factor 2 (365 aa).

An N5-methylglutamine modification is found at glutamine 252.

It belongs to the prokaryotic/mitochondrial release factor family. Methylated by PrmC. Methylation increases the termination efficiency of RF2.

The protein localises to the cytoplasm. Peptide chain release factor 2 directs the termination of translation in response to the peptide chain termination codons UGA and UAA. The sequence is that of Peptide chain release factor 2 from Shewanella baltica (strain OS223).